Here is a 471-residue protein sequence, read N- to C-terminus: Putative metabolite transport protein YncC (471 aa).

12 consecutive transmembrane segments (helical) span residues 13–33 (LIMISATFGGLLFGYDTGVIN), 50–70 (VTEGLVTSILLLGAAFGALLC), 88–108 (FLFFLASLGTALAPNVFIMAV), 111–131 (FLLGLAVGGASAMVPAFLAEM), 146–166 (LMIVGGQFLAYVFNAILGVTM), 175–195 (YMLVICAVPAIMLFASMLKVP), 256–276 (LLWIGIGVAIVNQITGVNSIM), 295–315 (IANIGNGLISVIAVIFGIWLV), 323–343 (ILLIGLAGTTTALLLIAIFSI), 358–378 (LTVLFLAFMQGCVGPVTWLVI), 393–413 (ISVFFLWILNFVIGFAFPILL), and 416–436 (VGLSFTFFIFVALGVLAIGFV).

It belongs to the major facilitator superfamily. Sugar transporter (TC 2.A.1.1) family.

The protein localises to the cell membrane. The sequence is that of Putative metabolite transport protein YncC (yncC) from Bacillus subtilis (strain 168).